The following is a 147-amino-acid chain: Hemoglobin subunit epsilon (147 aa).

A Globin domain is found at 3 to 147 (HLTAEEKSSV…VATALAHKYH (145 aa)). 2 positions are modified to phosphoserine: Ser-14 and Ser-51. Heme b contacts are provided by His-64 and His-93.

Belongs to the globin family. In terms of assembly, heterotetramer of two alpha chains and two epsilon chains in early embryonic hemoglobin Gower-2; two zeta chains and two epsilon chains in early embryonic hemoglobin Gower-1. In terms of tissue distribution, red blood cells.

The epsilon chain is a beta-type chain of early mammalian embryonic hemoglobin. This is Hemoglobin subunit epsilon (HBE1) from Carlito syrichta (Philippine tarsier).